Reading from the N-terminus, the 185-residue chain is Superoxide dismutase [Cu-Zn] (185 aa).

The N-terminal stretch at 1–18 is a signal peptide; the sequence is MTAFYKLCGMSMLSLVLA. Residues His85, His87, and His102 each contribute to the Cu cation site. Cys92 and Cys180 form a disulfide bridge. 4 residues coordinate Zn(2+): His102, His111, His120, and Asp123. His158 serves as a coordination point for Cu cation.

This sequence belongs to the Cu-Zn superoxide dismutase family. As to quaternary structure, homodimer. It depends on Cu cation as a cofactor. Requires Zn(2+) as cofactor.

The protein resides in the periplasm. It catalyses the reaction 2 superoxide + 2 H(+) = H2O2 + O2. Its function is as follows. Destroys radicals which are normally produced within the cells and which are toxic to biological systems. The sequence is that of Superoxide dismutase [Cu-Zn] (sodC) from Francisella tularensis subsp. holarctica (strain LVS).